Reading from the N-terminus, the 202-residue chain is Pyridoxal 5'-phosphate synthase subunit PdxT (202 aa).

52–54 (GES) contributes to the L-glutamine binding site. C84 serves as the catalytic Nucleophile. L-glutamine-binding positions include R116 and 143–144 (IR). Residues H184 and E186 each act as charge relay system in the active site.

This sequence belongs to the glutaminase PdxT/SNO family. In terms of assembly, in the presence of PdxS, forms a dodecamer of heterodimers. Only shows activity in the heterodimer.

It carries out the reaction aldehydo-D-ribose 5-phosphate + D-glyceraldehyde 3-phosphate + L-glutamine = pyridoxal 5'-phosphate + L-glutamate + phosphate + 3 H2O + H(+). It catalyses the reaction L-glutamine + H2O = L-glutamate + NH4(+). It participates in cofactor biosynthesis; pyridoxal 5'-phosphate biosynthesis. In terms of biological role, catalyzes the hydrolysis of glutamine to glutamate and ammonia as part of the biosynthesis of pyridoxal 5'-phosphate. The resulting ammonia molecule is channeled to the active site of PdxS. The protein is Pyridoxal 5'-phosphate synthase subunit PdxT of Pyrobaculum neutrophilum (strain DSM 2338 / JCM 9278 / NBRC 100436 / V24Sta) (Thermoproteus neutrophilus).